Reading from the N-terminus, the 144-residue chain is Large ribosomal subunit protein uL16 (144 aa).

This sequence belongs to the universal ribosomal protein uL16 family. As to quaternary structure, part of the 50S ribosomal subunit.

Its function is as follows. Binds 23S rRNA and is also seen to make contacts with the A and possibly P site tRNAs. The sequence is that of Large ribosomal subunit protein uL16 from Halalkalibacterium halodurans (strain ATCC BAA-125 / DSM 18197 / FERM 7344 / JCM 9153 / C-125) (Bacillus halodurans).